A 378-amino-acid chain; its full sequence is Copper-containing nitrite reductase (378 aa).

A signal peptide (tat-type signal) is located at residues 1 to 38; the sequence is MTEQLQMTRRTMLAGAALAGAVAPLLHTAQAHAAGAAA. 2 Plastocyanin-like domains span residues 39-213 and 214-378; these read AAGA…YDKI and YYVG…PASM. The Cu cation site is built by His-133, His-138, His-173, Cys-174, His-183, Met-188, and His-344.

It belongs to the multicopper oxidase family. In terms of assembly, homotrimer. The cofactor is Cu(+). Requires Cu(2+) as cofactor. FAD serves as cofactor. Post-translationally, predicted to be exported by the Tat system. The position of the signal peptide cleavage has been experimentally proven.

It is found in the periplasm. It carries out the reaction nitric oxide + Fe(III)-[cytochrome c] + H2O = Fe(II)-[cytochrome c] + nitrite + 2 H(+). Its pathway is nitrogen metabolism; nitrate reduction (denitrification); dinitrogen from nitrate: step 2/4. The protein is Copper-containing nitrite reductase (nirK) of Achromobacter cycloclastes.